We begin with the raw amino-acid sequence, 134 residues long: Ribosome-binding factor A (134 aa).

Belongs to the RbfA family. As to quaternary structure, monomer. Binds 30S ribosomal subunits, but not 50S ribosomal subunits or 70S ribosomes.

It localises to the cytoplasm. In terms of biological role, one of several proteins that assist in the late maturation steps of the functional core of the 30S ribosomal subunit. Associates with free 30S ribosomal subunits (but not with 30S subunits that are part of 70S ribosomes or polysomes). Required for efficient processing of 16S rRNA. May interact with the 5'-terminal helix region of 16S rRNA. This is Ribosome-binding factor A from Tolumonas auensis (strain DSM 9187 / NBRC 110442 / TA 4).